The chain runs to 196 residues: Imidazoleglycerol-phosphate dehydratase (196 aa).

Belongs to the imidazoleglycerol-phosphate dehydratase family.

It localises to the cytoplasm. The catalysed reaction is D-erythro-1-(imidazol-4-yl)glycerol 3-phosphate = 3-(imidazol-4-yl)-2-oxopropyl phosphate + H2O. The protein operates within amino-acid biosynthesis; L-histidine biosynthesis; L-histidine from 5-phospho-alpha-D-ribose 1-diphosphate: step 6/9. The chain is Imidazoleglycerol-phosphate dehydratase from Dehalococcoides mccartyi (strain ATCC BAA-2266 / KCTC 15142 / 195) (Dehalococcoides ethenogenes (strain 195)).